The sequence spans 213 residues: Peptidyl-tRNA hydrolase (213 aa).

Y15 serves as a coordination point for tRNA. Catalysis depends on H20, which acts as the Proton acceptor. 3 residues coordinate tRNA: Y66, N68, and N114. A disordered region spans residues 186–213; sequence MHAKPPRPKPPRPVTAPGAPVPPTEPSA. Pro residues predominate over residues 196 to 213; the sequence is PRPVTAPGAPVPPTEPSA.

This sequence belongs to the PTH family. Monomer.

The protein resides in the cytoplasm. It catalyses the reaction an N-acyl-L-alpha-aminoacyl-tRNA + H2O = an N-acyl-L-amino acid + a tRNA + H(+). Hydrolyzes ribosome-free peptidyl-tRNAs (with 1 or more amino acids incorporated), which drop off the ribosome during protein synthesis, or as a result of ribosome stalling. Its function is as follows. Catalyzes the release of premature peptidyl moieties from peptidyl-tRNA molecules trapped in stalled 50S ribosomal subunits, and thus maintains levels of free tRNAs and 50S ribosomes. In Leptothrix cholodnii (strain ATCC 51168 / LMG 8142 / SP-6) (Leptothrix discophora (strain SP-6)), this protein is Peptidyl-tRNA hydrolase.